A 23-amino-acid polypeptide reads, in one-letter code: Acidic phospholipase A2 CTs-A1 (23 aa).

It depends on Ca(2+) as a cofactor. Contains 7 disulfide bonds. As to expression, expressed by the venom gland.

It localises to the secreted. It carries out the reaction a 1,2-diacyl-sn-glycero-3-phosphocholine + H2O = a 1-acyl-sn-glycero-3-phosphocholine + a fatty acid + H(+). In terms of biological role, snake venom phospholipase A2 (PLA2) that shows a moderate inhibition of ADP-induced human platelet aggregation when tested on platelet rich plasma. Exhibits moderate hydrolytic activities and prefers the anionic micelles (dPPC with deoxycholate) to the zwitterionic micelles (dPPC with Triton X-100). PLA2 catalyzes the calcium-dependent hydrolysis of the 2-acyl groups in 3-sn-phosphoglycerides. This is Acidic phospholipase A2 CTs-A1 from Trimeresurus stejnegeri (Chinese green tree viper).